The following is a 170-amino-acid chain: Adenine phosphoribosyltransferase (170 aa).

Belongs to the purine/pyrimidine phosphoribosyltransferase family. Homodimer.

The protein resides in the cytoplasm. It catalyses the reaction AMP + diphosphate = 5-phospho-alpha-D-ribose 1-diphosphate + adenine. Its pathway is purine metabolism; AMP biosynthesis via salvage pathway; AMP from adenine: step 1/1. Functionally, catalyzes a salvage reaction resulting in the formation of AMP, that is energically less costly than de novo synthesis. The sequence is that of Adenine phosphoribosyltransferase from Fervidobacterium nodosum (strain ATCC 35602 / DSM 5306 / Rt17-B1).